Here is a 463-residue protein sequence, read N- to C-terminus: Maintenance of mitochondrial morphology protein 1-2 (463 aa).

Over 1-23 (MVIPAELIQKALKQQSGWGFTEG) the chain is Lumenal. The chain crosses the membrane as a helical span at residues 24–44 (LVLGQLSVIITVIIILKFVIF). The Cytoplasmic segment spans residues 45–463 (AENKSPKKGN…TGADTASGSS (419 aa)). A disordered region spans residues 72-152 (GGQTANGVKT…VAGSTSNLAV (81 aa)). Residues 108-122 (RPGSSRVSMVRSTSG) show a composition bias toward polar residues. In terms of domain architecture, SMP-LTD spans 205–435 (APESLDWFNV…EPHQMIFILP (231 aa)).

It belongs to the MMM1 family. As to quaternary structure, homodimer. Component of the ER-mitochondria encounter structure (ERMES) or MDM complex, composed of MMM1, MDM10, MDM12 and MDM34. An MMM1 homodimer associates with one molecule of MDM12 on each side in a pairwise head-to-tail manner, and the SMP-LTD domains of MMM1 and MDM12 generate a continuous hydrophobic tunnel for phospholipid trafficking.

The protein localises to the endoplasmic reticulum membrane. In terms of biological role, component of the ERMES/MDM complex, which serves as a molecular tether to connect the endoplasmic reticulum (ER) and mitochondria. Components of this complex are involved in the control of mitochondrial shape and protein biogenesis, and function in nonvesicular lipid trafficking between the ER and mitochondria. The MDM12-MMM1 subcomplex functions in the major beta-barrel assembly pathway that is responsible for biogenesis of all outer membrane beta-barrel proteins, and acts in a late step after the SAM complex. The MDM10-MDM12-MMM1 subcomplex further acts in the TOM40-specific pathway after the action of the MDM12-MMM1 complex. Essential for establishing and maintaining the structure of mitochondria and maintenance of mtDNA nucleoids. This chain is Maintenance of mitochondrial morphology protein 1-2, found in Yarrowia lipolytica (strain CLIB 122 / E 150) (Yeast).